The chain runs to 630 residues: L-amino-acid oxidase (630 aa).

An N-terminal signal peptide occupies residues 1–21 (MAGLALRLVLAATLLGLAGSL). A disulfide bond links Cys35 and Cys198. Residue Asn53 is glycosylated (N-linked (GlcNAc...) asparagine). FAD-binding positions include 68 to 69 (VA), 88 to 89 (EA), Arg96, and 112 to 115 (GAMR). Arg115 is a substrate binding site. 2 N-linked (GlcNAc...) asparagine glycosylation sites follow: Asn133 and Asn219. Residue Val286 coordinates FAD. Tyr395 is a binding site for substrate. Residues Glu479 and 486–491 (GWVETA) each bind FAD. 486-487 (GW) is a substrate binding site. The interval 532 to 554 (GERPEEQQAREEVSPDEQEPSHK) is disordered.

Belongs to the flavin monoamine oxidase family. FIG1 subfamily. FAD is required as a cofactor. In terms of tissue distribution, primarily found in immune tissues. As to expression, primarily found in immune tissues, mostly in B-lymphocytes. Restricted to the testis, predominantly in Sertoli cells at the periphery of the ducts, and the brain, including Purkinje cells, hippocampus and mitral cells in the olfactory bulb. No isoform 2 expression in fetal tissues.

Its subcellular location is the secreted. The protein resides in the cytoplasmic vesicle. The protein localises to the secretory vesicle. It localises to the acrosome. It is found in the lysosome. It carries out the reaction an L-alpha-amino acid + O2 + H2O = a 2-oxocarboxylate + H2O2 + NH4(+). The enzyme catalyses L-tryptophan + O2 + H2O = indole-3-pyruvate + H2O2 + NH4(+). The catalysed reaction is L-phenylalanine + O2 + H2O = 3-phenylpyruvate + H2O2 + NH4(+). It catalyses the reaction L-tyrosine + O2 + H2O = 3-(4-hydroxyphenyl)pyruvate + H2O2 + NH4(+). It carries out the reaction L-arginine + O2 + H2O = 5-guanidino-2-oxopentanoate + H2O2 + NH4(+). It functions in the pathway amino-acid degradation; L-tryptophan degradation via pyruvate pathway. In terms of biological role, secreted L-amino-acid oxidase that acts as a key immunoregulator. Has preference for L-aromatic amino acids: converts phenylalanine (Phe), tyrosine (Tyr) and tryptophan (Trp) to phenylpyruvic acid (PP), hydroxyphenylpyruvic acid (HPP), and indole-3-pyruvic acid (I3P), respectively. Also has weak L-arginine oxidase activity. Acts as a negative regulator of anti-tumor immunity by mediating Trp degradation via an indole pyruvate pathway that activates the transcription factor AHR. IL4I1-mediated Trp catabolism generates I3P, giving rise to indole metabolites (indole-3-acetic acid (IAA) and indole-3-aldehyde (I3A)) and kynurenic acid, which act as ligands for AHR, a ligand-activated transcription factor that plays important roles in immunity and cancer. AHR activation by indoles following IL4I1-mediated Trp degradation enhances tumor progression by promoting cancer cell motility and suppressing adaptive immunity. Also has an immunoregulatory function in some immune cell, probably by mediating Trp degradation and promoting downstream AHR activation: inhibits T-cell activation and proliferation, promotes the differentiation of naive CD4(+) T-cells into FOXP3(+) regulatory T-cells (Treg) and regulates the development and function of B-cells. Also regulates M2 macrophage polarization by inhibiting T-cell activation. Also has antibacterial properties by inhibiting growth of Gram negative and Gram positive bacteria through the production of NH4(+) and H2O2. This is L-amino-acid oxidase from Mus musculus (Mouse).